The primary structure comprises 95 residues: uncharacterized protein (95 aa).

This is an uncharacterized protein from Autographa californica nuclear polyhedrosis virus (AcMNPV).